Here is a 285-residue protein sequence, read N- to C-terminus: Protoheme IX farnesyltransferase (285 aa).

Transmembrane regions (helical) follow at residues 8–28 (ITKP…FLFA), 36–56 (YVLF…ACVF), 80–100 (LLPV…GLSI), 107–127 (FISM…YTMF), 133–153 (FYST…GYTA), 163–183 (ILLF…ISIM), 209–229 (IFFY…LGYL), 232–252 (NFLL…YSNI), and 265–285 (FYFS…DVFF).

It belongs to the UbiA prenyltransferase family. Protoheme IX farnesyltransferase subfamily.

The protein resides in the cell membrane. The enzyme catalyses heme b + (2E,6E)-farnesyl diphosphate + H2O = Fe(II)-heme o + diphosphate. The protein operates within porphyrin-containing compound metabolism; heme O biosynthesis; heme O from protoheme: step 1/1. Converts heme B (protoheme IX) to heme O by substitution of the vinyl group on carbon 2 of heme B porphyrin ring with a hydroxyethyl farnesyl side group. In Buchnera aphidicola subsp. Acyrthosiphon pisum (strain Tuc7), this protein is Protoheme IX farnesyltransferase.